The sequence spans 167 residues: Insertion element IS1 2 protein InsB (167 aa).

Belongs to the transposase 27 family.

Absolutely required for transposition of IS1. The chain is Insertion element IS1 2 protein InsB (insB2) from Escherichia coli (strain K12).